Here is a 231-residue protein sequence, read N- to C-terminus: Large ribosomal subunit protein uL1 (231 aa).

This sequence belongs to the universal ribosomal protein uL1 family. In terms of assembly, part of the 50S ribosomal subunit.

Functionally, binds directly to 23S rRNA. The L1 stalk is quite mobile in the ribosome, and is involved in E site tRNA release. Its function is as follows. Protein L1 is also a translational repressor protein, it controls the translation of the L11 operon by binding to its mRNA. This Paracidovorax citrulli (strain AAC00-1) (Acidovorax citrulli) protein is Large ribosomal subunit protein uL1.